Reading from the N-terminus, the 447-residue chain is Beclin-1 (447 aa).

The segment covering 44–53 has biased composition (low complexity); that stretch reads PPLTAAPARP. Residues 44 to 71 form a disordered region; it reads PPLTAAPARPGDAQEESALSEEAFTEGR. Positions 105–124 match the BH3 motif; sequence TMENLSRRLKVTGDLFDIMS. Positions 139–266 form a coiled coil; it reads DTLLDQLDTQ…QLDKLKKTNV (128 aa). The segment at 242–447 is evolutionary conserved domain (ECD); the sequence is DELKSVENQM…AWVSSQFYNK (206 aa). A required for membrane-association region spans residues 422 to 447; that stretch reads WTKALKFMLTNLKWGLAWVSSQFYNK.

It belongs to the beclin family. Component of the PI3K (PI3KC3/PI3K-III/class III phosphatidylinositol 3-kinase) complex. May be proteolytically processed by caspases; the C-terminal fragment(s) may induce apoptosis.

The protein localises to the cytoplasm. It localises to the golgi apparatus. It is found in the trans-Golgi network membrane. The protein resides in the endosome membrane. Its subcellular location is the endoplasmic reticulum membrane. The protein localises to the mitochondrion membrane. It localises to the cytoplasmic vesicle. It is found in the autophagosome. In terms of biological role, plays a central role in autophagy. Acts as core subunit of different PI3K complex forms that mediate formation of phosphatidylinositol 3-phosphate and are believed to play a role in multiple membrane trafficking pathways such as initiation of autophagosomes, maturation of autophagosomes and endocytosis. Involved in regulation of degradative endocytic trafficking and required for the abscission step in cytokinesis, probably in the context of PI3KC3-C2. In Gallus gallus (Chicken), this protein is Beclin-1 (BECN1).